A 571-amino-acid chain; its full sequence is Proline--tRNA ligase (571 aa).

This sequence belongs to the class-II aminoacyl-tRNA synthetase family. ProS type 1 subfamily. Homodimer.

It localises to the cytoplasm. The enzyme catalyses tRNA(Pro) + L-proline + ATP = L-prolyl-tRNA(Pro) + AMP + diphosphate. Functionally, catalyzes the attachment of proline to tRNA(Pro) in a two-step reaction: proline is first activated by ATP to form Pro-AMP and then transferred to the acceptor end of tRNA(Pro). As ProRS can inadvertently accommodate and process non-cognate amino acids such as alanine and cysteine, to avoid such errors it has two additional distinct editing activities against alanine. One activity is designated as 'pretransfer' editing and involves the tRNA(Pro)-independent hydrolysis of activated Ala-AMP. The other activity is designated 'posttransfer' editing and involves deacylation of mischarged Ala-tRNA(Pro). The misacylated Cys-tRNA(Pro) is not edited by ProRS. This Leuconostoc citreum (strain KM20) protein is Proline--tRNA ligase.